Here is a 350-residue protein sequence, read N- to C-terminus: Beta-ketodecanoyl-[acyl-carrier-protein] synthase (350 aa).

Residue cysteine 133 is part of the active site.

The protein belongs to the thiolase-like superfamily. Beta-ketoacyl-ACP synthases family.

The catalysed reaction is octanoyl-CoA + malonyl-[ACP] + H(+) = 3-oxodecanoyl-[ACP] + CO2 + CoA. It functions in the pathway lipid metabolism; fatty acid biosynthesis. In terms of biological role, catalyzes the condensation of octanoyl-CoA, obtained from exogenously supplied fatty acids via beta-oxidation, with malonyl-[acyl-carrier protein], forming 3-oxodecanoyl-[acyl-carrier protein], an intermediate of the fatty acid elongation cycle that can then be extended to supply all of the cellular fatty acid needs. The enzyme thereby shunts fatty acid degradation intermediates from the beta-oxidation pathway into de novo fatty acid biosynthesis. The protein is Beta-ketodecanoyl-[acyl-carrier-protein] synthase of Pseudomonas aeruginosa (strain ATCC 15692 / DSM 22644 / CIP 104116 / JCM 14847 / LMG 12228 / 1C / PRS 101 / PAO1).